Here is a 604-residue protein sequence, read N- to C-terminus: NADP-dependent malic enzyme, mitochondrial (604 aa).

The segment at 29–50 (APAQGCHSKPGPARPVPLKKRG) is disordered. Catalysis depends on Tyr-137, which acts as the Proton donor. Arg-190 contributes to the NAD(+) binding site. Catalysis depends on Lys-208, which acts as the Proton acceptor. A divalent metal cation is bound by residues Glu-280, Asp-281, and Asp-304. Asp-304 is a binding site for NAD(+). Ser-371 bears the Phosphoserine mark. Asn-443 is a binding site for NAD(+).

The protein belongs to the malic enzymes family. Mg(2+) is required as a cofactor. Requires Mn(2+) as cofactor. In terms of tissue distribution, expressed predominantly in organs with a low-division rate.

It localises to the mitochondrion matrix. It catalyses the reaction (S)-malate + NADP(+) = pyruvate + CO2 + NADPH. The enzyme catalyses oxaloacetate + H(+) = pyruvate + CO2. Catalyzes the oxidative decarboxylation of (S)-malate to pyruvate using NADP(+) as a cofactor. Can also reverse the decarboxylation reaction, but only with significantly lower efficiency. This Homo sapiens (Human) protein is NADP-dependent malic enzyme, mitochondrial.